A 410-amino-acid chain; its full sequence is Lissencephaly-1 homolog B (410 aa).

The LisH domain maps to 7–39 (QRDELNRAIADYLRSNGYEEAYSTFKKEAELDM). Positions 56 to 82 (TSVIRLQKKVMELESKLNEAKEEITLG) form a coiled coil. WD repeat units lie at residues 106 to 147 (GHRS…RTLK), 148 to 187 (GHTD…CIRT), 190 to 229 (GHDH…CVKT), 232 to 271 (GHRE…CKAE), 274 to 333 (EHEH…CLMT), 336 to 375 (GHDN…CMKT), and 378 to 410 (AHEH…WECR).

Belongs to the WD repeat LIS1/nudF family. As to quaternary structure, can self-associate. Component of the cytosolic PAF-AH (I) heterotetrameric enzyme, which is composed of PAFAH1B1 (beta), PAFAH1B2 (alpha2) and PAFAH1B3 (alpha1) subunits. The catalytic activity of the enzyme resides in the alpha1 (PAFAH1B3) and alpha2 (PAFAH1B2) subunits, whereas the beta subunit (PAFAH1B1) has regulatory activity. Trimer formation is not essential for the catalytic activity. Interacts with dynein, dynactin, nde1 and ndel1.

Its subcellular location is the cytoplasm. It is found in the cytoskeleton. It localises to the microtubule organizing center. The protein localises to the centrosome. Regulatory subunit (beta subunit) of the cytosolic type I platelet-activating factor (PAF) acetylhydrolase (PAF-AH (I)), an enzyme that catalyzes the hydrolyze of the acetyl group at the sn-2 position of PAF and its analogs and participates in PAF inactivation. Regulates the PAF-AH (I) activity in a catalytic dimer composition-dependent manner. Positively regulates the activity of the minus-end directed microtubule motor protein dynein. May enhance dynein-mediated microtubule sliding by targeting dynein to the microtubule plus end. Required for several dynein- and microtubule-dependent processes such as the maintenance of Golgi integrity, the peripheral transport of microtubule fragments and the coupling of the nucleus and centrosome. May be required for proliferation of neuronal precursors and neuronal migration. This is Lissencephaly-1 homolog B (pafah1b1-2) from Salmo salar (Atlantic salmon).